The primary structure comprises 253 residues: uncharacterized protein (253 aa).

This is an uncharacterized protein from Bacillus subtilis (strain 168).